Reading from the N-terminus, the 307-residue chain is Geranylgeranyl diphosphate synthase (307 aa).

3 residues coordinate isopentenyl diphosphate: Lys52, Arg55, and His86. 2 residues coordinate Mg(2+): Asp93 and Asp99. Arg104 is a binding site for (2E,6E)-farnesyl diphosphate. An isopentenyl diphosphate-binding site is contributed by Arg105. (2E,6E)-farnesyl diphosphate contacts are provided by Lys188, Thr189, and Gln226.

The protein belongs to the FPP/GGPP synthase family. It depends on Mg(2+) as a cofactor.

It catalyses the reaction isopentenyl diphosphate + (2E,6E)-farnesyl diphosphate = (2E,6E,10E)-geranylgeranyl diphosphate + diphosphate. It functions in the pathway isoprenoid biosynthesis; geranylgeranyl diphosphate biosynthesis; geranylgeranyl diphosphate from farnesyl diphosphate and isopentenyl diphosphate: step 1/1. In terms of biological role, catalyzes the condensation of farnesyl diphosphate (FPP) and isopentenyl diphosphate (IPP) to yield geranylgeranyl diphosphate (GGPP) needed for biosynthesis of carotenoids and diterpenes. The chain is Geranylgeranyl diphosphate synthase (crtE) from Pseudescherichia vulneris (Escherichia vulneris).